A 183-amino-acid polypeptide reads, in one-letter code: ATP synthase subunit delta (183 aa).

It belongs to the ATPase delta chain family. In terms of assembly, F-type ATPases have 2 components, F(1) - the catalytic core - and F(0) - the membrane proton channel. F(1) has five subunits: alpha(3), beta(3), gamma(1), delta(1), epsilon(1). F(0) has three main subunits: a(1), b(2) and c(10-14). The alpha and beta chains form an alternating ring which encloses part of the gamma chain. F(1) is attached to F(0) by a central stalk formed by the gamma and epsilon chains, while a peripheral stalk is formed by the delta and b chains.

It localises to the cell inner membrane. In terms of biological role, f(1)F(0) ATP synthase produces ATP from ADP in the presence of a proton or sodium gradient. F-type ATPases consist of two structural domains, F(1) containing the extramembraneous catalytic core and F(0) containing the membrane proton channel, linked together by a central stalk and a peripheral stalk. During catalysis, ATP synthesis in the catalytic domain of F(1) is coupled via a rotary mechanism of the central stalk subunits to proton translocation. Its function is as follows. This protein is part of the stalk that links CF(0) to CF(1). It either transmits conformational changes from CF(0) to CF(1) or is implicated in proton conduction. The polypeptide is ATP synthase subunit delta (Desulforapulum autotrophicum (strain ATCC 43914 / DSM 3382 / VKM B-1955 / HRM2) (Desulfobacterium autotrophicum)).